The chain runs to 355 residues: Peptide chain release factor 1 (355 aa).

N5-methylglutamine is present on Gln233.

The protein belongs to the prokaryotic/mitochondrial release factor family. In terms of processing, methylated by PrmC. Methylation increases the termination efficiency of RF1.

Its subcellular location is the cytoplasm. Peptide chain release factor 1 directs the termination of translation in response to the peptide chain termination codons UAG and UAA. This Bacillus anthracis protein is Peptide chain release factor 1.